Consider the following 212-residue polypeptide: Orotate phosphoribosyltransferase (212 aa).

Residue Lys-26 coordinates 5-phospho-alpha-D-ribose 1-diphosphate. Residue 34–35 (FF) participates in orotate binding. 5-phospho-alpha-D-ribose 1-diphosphate-binding positions include 72–73 (YK), Arg-99, Lys-100, Lys-103, His-105, and 124–132 (DDVITVGTA). Orotate-binding residues include Thr-128 and Arg-156.

The protein belongs to the purine/pyrimidine phosphoribosyltransferase family. PyrE subfamily. As to quaternary structure, homodimer. Mg(2+) is required as a cofactor.

The catalysed reaction is orotidine 5'-phosphate + diphosphate = orotate + 5-phospho-alpha-D-ribose 1-diphosphate. It participates in pyrimidine metabolism; UMP biosynthesis via de novo pathway; UMP from orotate: step 1/2. Its function is as follows. Catalyzes the transfer of a ribosyl phosphate group from 5-phosphoribose 1-diphosphate to orotate, leading to the formation of orotidine monophosphate (OMP). The sequence is that of Orotate phosphoribosyltransferase from Ruthia magnifica subsp. Calyptogena magnifica.